The chain runs to 159 residues: SsrA-binding protein (159 aa).

Belongs to the SmpB family.

The protein resides in the cytoplasm. Its function is as follows. Required for rescue of stalled ribosomes mediated by trans-translation. Binds to transfer-messenger RNA (tmRNA), required for stable association of tmRNA with ribosomes. tmRNA and SmpB together mimic tRNA shape, replacing the anticodon stem-loop with SmpB. tmRNA is encoded by the ssrA gene; the 2 termini fold to resemble tRNA(Ala) and it encodes a 'tag peptide', a short internal open reading frame. During trans-translation Ala-aminoacylated tmRNA acts like a tRNA, entering the A-site of stalled ribosomes, displacing the stalled mRNA. The ribosome then switches to translate the ORF on the tmRNA; the nascent peptide is terminated with the 'tag peptide' encoded by the tmRNA and targeted for degradation. The ribosome is freed to recommence translation, which seems to be the essential function of trans-translation. This is SsrA-binding protein from Saccharophagus degradans (strain 2-40 / ATCC 43961 / DSM 17024).